We begin with the raw amino-acid sequence, 883 residues long: Serine/threonine-protein kinase greatwall (883 aa).

M1 is modified (N-acetylmethionine). Residues 1 to 23 (MEPTMGGEMESGGGAATGECVNR) form a disordered region. One can recognise a Protein kinase domain in the interval 35 to 839 (FTIVKPISRG…MKELKHHPLF (805 aa)). Residues 41–49 (ISRGAFGKV) and K62 contribute to the ATP site. Residue D156 is the Proton acceptor of the active site. 2 positions are modified to phosphothreonine: T209 and T224. At S295 the chain carries Phosphoserine. The disordered stretch occupies residues 298–317 (RLATSSTSSPSHTFISSMES). Residues 301-314 (TSSTSSPSHTFISS) are compositionally biased toward low complexity. Phosphoserine occurs at positions 373 and 456. The segment at 511–530 (ENVGSSFTDKHQTPEKSPVP) is disordered. The residue at position 523 (T523) is a Phosphothreonine. 2 positions are modified to phosphoserine: S556 and S560. Residues 569–597 (IHMDSDSSFPGISIMESPLGGQSLDPDKN) form a disordered region. S635, S661, and S672 each carry phosphoserine. Residues 706–737 (RSDMPYQQTPNQVKSETPYRTPKSVRRGAAPV) are disordered. Residues 710–720 (PYQQTPNQVKS) show a composition bias toward polar residues. T726 carries the phosphothreonine modification. At S729 the chain carries Phosphoserine. T745 is modified (phosphothreonine; by CDK1). The region spanning 840–883 (SGVDWENLQHQKMPFIPQPDDETDTSYFEARNNAQHLTVSGFSL) is the AGC-kinase C-terminal domain. A phosphoserine mark is found at S879 and S882.

This sequence belongs to the protein kinase superfamily. AGC Ser/Thr protein kinase family. Post-translationally, phosphorylation at Thr-745 by CDK1 during M phase activates its kinase activity. Maximum phosphorylation occurs in prometaphase.

It localises to the cytoplasm. Its subcellular location is the cytoskeleton. It is found in the microtubule organizing center. The protein localises to the centrosome. The protein resides in the nucleus. It catalyses the reaction L-seryl-[protein] + ATP = O-phospho-L-seryl-[protein] + ADP + H(+). The enzyme catalyses L-threonyl-[protein] + ATP = O-phospho-L-threonyl-[protein] + ADP + H(+). Functionally, serine/threonine kinase that plays a key role in M phase by acting as a regulator of mitosis entry and maintenance. Acts by promoting the inactivation of protein phosphatase 2A (PP2A) during M phase: does not directly inhibit PP2A but acts by mediating phosphorylation and subsequent activation of ARPP19 and ENSA at 'Ser-62' and 'Ser-67', respectively. ARPP19 and ENSA are phosphatase inhibitors that specifically inhibit the PPP2R2D (PR55-delta) subunit of PP2A. Inactivation of PP2A during M phase is essential to keep cyclin-B1-CDK1 activity high. Following DNA damage, it is also involved in checkpoint recovery by being inhibited. This chain is Serine/threonine-protein kinase greatwall (MASTL), found in Bos taurus (Bovine).